The sequence spans 250 residues: Small ribosomal subunit protein uS3 (250 aa).

Residues 39-111 (IRTLIKNHYP…KIQINIFEVK (73 aa)) form the KH type-2 domain.

The protein belongs to the universal ribosomal protein uS3 family. In terms of assembly, part of the 30S ribosomal subunit. Forms a tight complex with proteins S10 and S14.

Its function is as follows. Binds the lower part of the 30S subunit head. Binds mRNA in the 70S ribosome, positioning it for translation. The polypeptide is Small ribosomal subunit protein uS3 (Elm witches'-broom phytoplasma).